A 218-amino-acid chain; its full sequence is Ornithine decarboxylase antizyme 2 (218 aa).

It belongs to the ODC antizyme family. As to quaternary structure, interacts with ODC1 and thereby sterically blocks ODC homodimerization. In terms of tissue distribution, expressed ubiquitously in 24 hours embryos, with highest levels in telencephalon, lens, retina, cerebellum and hindbrain primordia.

Ornithine decarboxylase (ODC) antizyme protein that negatively regulates ODC activity and intracellular polyamine biosynthesis and uptake in response to increased intracellular polyamine levels. Binds to ODC monomers, inhibiting the assembly of the functional ODC homodimers. Does not target the ODC monomers for degradation, which allows a protein synthesis-independent restoration of ODC activity. The polypeptide is Ornithine decarboxylase antizyme 2 (oaz1b) (Danio rerio (Zebrafish)).